Here is a 361-residue protein sequence, read N- to C-terminus: Phospho-N-acetylmuramoyl-pentapeptide-transferase (361 aa).

A run of 11 helical transmembrane segments spans residues 10 to 30, 40 to 60, 84 to 104, 107 to 127, 147 to 167, 175 to 195, 206 to 226, 232 to 252, 260 to 280, 288 to 308, and 341 to 361; these read PGTGLQWSLGLIALILAACLI, LSLPLLLAGALSWLVCWIGVP, GTPTMGGLLLVPCGVVVGSLV, GDPRLLPIGLVTLAFMVIGGI, LLLQALAAGLFLLWAGLHGAI, WGWLLPIGLLIWPLGLFVFLA, LDGLAAGVGAIVLVGLSLQLM, GDPALAGYGAALAGAWLGFLL, VFMGDTGSLAMGAALSAIALL, LLMGGLLLAESLSVILQVWVF, and VVVSFWGISLLLVALGLVLVP.

It belongs to the glycosyltransferase 4 family. MraY subfamily. The cofactor is Mg(2+).

Its subcellular location is the cell inner membrane. The enzyme catalyses UDP-N-acetyl-alpha-D-muramoyl-L-alanyl-gamma-D-glutamyl-meso-2,6-diaminopimeloyl-D-alanyl-D-alanine + di-trans,octa-cis-undecaprenyl phosphate = di-trans,octa-cis-undecaprenyl diphospho-N-acetyl-alpha-D-muramoyl-L-alanyl-D-glutamyl-meso-2,6-diaminopimeloyl-D-alanyl-D-alanine + UMP. It functions in the pathway cell wall biogenesis; peptidoglycan biosynthesis. Catalyzes the initial step of the lipid cycle reactions in the biosynthesis of the cell wall peptidoglycan: transfers peptidoglycan precursor phospho-MurNAc-pentapeptide from UDP-MurNAc-pentapeptide onto the lipid carrier undecaprenyl phosphate, yielding undecaprenyl-pyrophosphoryl-MurNAc-pentapeptide, known as lipid I. In Synechococcus sp. (strain RCC307), this protein is Phospho-N-acetylmuramoyl-pentapeptide-transferase.